The chain runs to 510 residues: Inositol-3-phosphate synthase (510 aa).

NAD(+) contacts are provided by Gly-70, Gly-71, Asn-72, Asn-73, Asp-143, Ile-180, Gln-190, Arg-193, Thr-230, Ala-231, Asn-232, Thr-233, Gly-281, Ser-282, Asp-306, Ser-309, Asn-340, Asn-341, Asp-342, Lys-355, Ala-393, Asp-394, Asp-422, and Ser-423.

This sequence belongs to the myo-inositol 1-phosphate synthase family. It depends on NAD(+) as a cofactor.

Its subcellular location is the cytoplasm. It localises to the cytosol. The protein localises to the nucleus. The enzyme catalyses D-glucose 6-phosphate = 1D-myo-inositol 3-phosphate. It participates in polyol metabolism; myo-inositol biosynthesis; myo-inositol from D-glucose 6-phosphate: step 1/2. In terms of biological role, key enzyme in myo-inositol biosynthesis pathway that catalyzes the conversion of glucose 6-phosphate to 1-myo-inositol 1-phosphate in a NAD-dependent manner. This chain is Inositol-3-phosphate synthase, found in Brassica napus (Rape).